The following is a 277-amino-acid chain: uncharacterized protein (277 aa).

The disordered stretch occupies residues 232-262 (NNESAICESQASSKEDERSDKTTSSSKKKSF). Residues 234-243 (ESAICESQAS) show a composition bias toward polar residues.

Its subcellular location is the cytoplasm. It localises to the nucleus. This is an uncharacterized protein from Schizosaccharomyces pombe (strain 972 / ATCC 24843) (Fission yeast).